Here is a 277-residue protein sequence, read N- to C-terminus: 4-hydroxybenzoate octaprenyltransferase (277 aa).

8 helical membrane-spanning segments follow: residues 24–44 (FAAAGGIPSSSILIIFILGVI), 81–101 (VEAKVLFFVLLIIAFLLDLSL), 102–122 (NQYAFLLSFVAVALAVIYPFM), 129–149 (PQVVLGMAFGWAIPMAYGAVI), 152–172 (LPLTCWLLFLANILWTVAYDT), 201–221 (IIALLQFLSLILFILFGWLSE), 224–244 (IGYFIVLALTSTLFIYQCWLT), and 255–275 (AFLNNNYFGFGIFIAILVGIY).

The protein belongs to the UbiA prenyltransferase family. It depends on Mg(2+) as a cofactor.

The protein localises to the cell inner membrane. It carries out the reaction all-trans-octaprenyl diphosphate + 4-hydroxybenzoate = 4-hydroxy-3-(all-trans-octaprenyl)benzoate + diphosphate. The protein operates within cofactor biosynthesis; ubiquinone biosynthesis. Its function is as follows. Catalyzes the prenylation of para-hydroxybenzoate (PHB) with an all-trans polyprenyl group. Mediates the second step in the final reaction sequence of ubiquinone-8 (UQ-8) biosynthesis, which is the condensation of the polyisoprenoid side chain with PHB, generating the first membrane-bound Q intermediate 3-octaprenyl-4-hydroxybenzoate. This chain is 4-hydroxybenzoate octaprenyltransferase, found in Haemophilus ducreyi (strain 35000HP / ATCC 700724).